The chain runs to 257 residues: Probable ABC transporter arginine-binding protein ArtJ (257 aa).

Residues 1-23 form the signal peptide; the sequence is MCIKRKKTWIAFLAVVCSFCLTG. L-arginine contacts are provided by Asn41, Glu48, Gly100, Ser102, Arg107, and Tyr151.

Belongs to the bacterial solute-binding protein 3 family.

The protein localises to the secreted. The protein resides in the cell surface. Probably part of an ABC transporter complex involved in arginine transport. Binds arginine. Interacts with host epithelial cells, suggesting a role in host-cell adhesion during infection. In Chlamydia trachomatis serovar D (strain ATCC VR-885 / DSM 19411 / UW-3/Cx), this protein is Probable ABC transporter arginine-binding protein ArtJ.